We begin with the raw amino-acid sequence, 388 residues long: GDP-4-keto-6-deoxy-D-mannose 3-dehydratase (388 aa).

Residue 26-29 (KMFT) coordinates GDP-4-dehydro-alpha-D-rhamnose. The chain crosses the membrane as a helical span at residues 49-69 (YAVMVSSGSTANLLMIAALFF). Pyridoxal 5'-phosphate is bound by residues 56–57 (GS), Trp-88, Glu-162, and Ser-183. His-188 functions as the Proton donor/acceptor in the catalytic mechanism. His-215 is an L-glutamate binding site. Position 219 (Arg-219) interacts with GDP-4-dehydro-alpha-D-rhamnose. Pyridoxal 5'-phosphate is bound at residue Asn-248. Residue Arg-250 coordinates L-glutamate. Glu-329 serves as a coordination point for GDP-4-dehydro-alpha-D-rhamnose.

This sequence belongs to the DegT/DnrJ/EryC1 family. Homodimer. It depends on pyridoxal 5'-phosphate as a cofactor.

It is found in the cell membrane. The catalysed reaction is GDP-4-dehydro-alpha-D-rhamnose + L-glutamate = GDP-4-dehydro-3,6-dideoxy-alpha-D-mannose + 2-oxoglutarate + NH4(+). It participates in nucleotide-sugar metabolism; GDP-L-colitose biosynthesis. Functionally, involved in the biosynthesis of L-colitose, a 3,6-dideoxyhexose present in the O-antigen region of lipopolysaccharides (LPS), where it serves as an antigenic determinant and is vital for bacterial defense and survival. Catalyzes the removal of the C3'-hydroxyl group from GDP-4-keto-6-deoxy-D-mannose via a combined transamination-deoxygenation reaction. The catalysis is initiated by a transamination step in which pyridoxal 5'-phosphate (PLP) is converted to pyridoxamine 5'-phosphate (PMP) in the presence of L-glutamate. This coenzyme then forms a Schiff base with GDP-4-keto-6-deoxy-D-mannose and the resulting adduct undergoes a PMP-mediated beta-dehydration reaction to give a sugar enamine intermediate, which after tautomerization and hydrolysis to release ammonia yields GDP-4-keto-3,6-dideoxy-D-mannose as a product. In vitro, is able to catalyze the formation of GDP-4-keto-3,6-dideoxymannose using GDP-perosamine rather than GDP-4-keto-6-deoxymannose as a substrate, with no need of glutamate. The chain is GDP-4-keto-6-deoxy-D-mannose 3-dehydratase from Escherichia coli O55:H7 (strain CB9615 / EPEC).